We begin with the raw amino-acid sequence, 1209 residues long: DNA-directed RNA polymerase subunit beta' (1209 aa).

Zn(2+) is bound by residues Cys-60, Cys-62, Cys-75, and Cys-78. Positions 450, 452, and 454 each coordinate Mg(2+). Cys-819, Cys-893, Cys-900, and Cys-903 together coordinate Zn(2+).

It belongs to the RNA polymerase beta' chain family. The RNAP catalytic core consists of 2 alpha, 1 beta, 1 beta' and 1 omega subunit. When a sigma factor is associated with the core the holoenzyme is formed, which can initiate transcription. It depends on Mg(2+) as a cofactor. Zn(2+) is required as a cofactor.

The catalysed reaction is RNA(n) + a ribonucleoside 5'-triphosphate = RNA(n+1) + diphosphate. Functionally, DNA-dependent RNA polymerase catalyzes the transcription of DNA into RNA using the four ribonucleoside triphosphates as substrates. This is DNA-directed RNA polymerase subunit beta' from Streptococcus mutans serotype c (strain ATCC 700610 / UA159).